Consider the following 301-residue polypeptide: GTPase Era (301 aa).

Positions 7 to 175 (YCGFIAIVGR…AAIVRKHLPE (169 aa)) constitute an Era-type G domain. The G1 stretch occupies residues 15 to 22 (GRPNVGKS). Position 15-22 (15-22 (GRPNVGKS)) interacts with GTP. The G2 stretch occupies residues 41-45 (QTTRH). A G3 region spans residues 62–65 (DTPG). GTP is bound by residues 62-66 (DTPGL) and 124-127 (NKVD). Residues 124–127 (NKVD) form a G4 region. The tract at residues 154–156 (ISA) is G5. The 78-residue stretch at 206–283 (LGAELPYSVT…HLELWVKVKS (78 aa)) folds into the KH type-2 domain.

The protein belongs to the TRAFAC class TrmE-Era-EngA-EngB-Septin-like GTPase superfamily. Era GTPase family. As to quaternary structure, monomer.

Its subcellular location is the cytoplasm. It is found in the cell inner membrane. Functionally, an essential GTPase that binds both GDP and GTP, with rapid nucleotide exchange. Plays a role in 16S rRNA processing and 30S ribosomal subunit biogenesis and possibly also in cell cycle regulation and energy metabolism. The chain is GTPase Era from Shigella flexneri.